A 94-amino-acid polypeptide reads, in one-letter code: MKLIFIFLTLLIFVSSCTSILIKESSEEERIYPFNPVASPFDPRSLNQILKIGKIGYCFDCARACMRRDRYIRTCSFERKLCRCSYSHIHHTHG.

Residues 1-19 (MKLIFIFLTLLIFVSSCTS) form the signal peptide. 3 cysteine pairs are disulfide-bonded: cysteine 58-cysteine 75, cysteine 61-cysteine 82, and cysteine 65-cysteine 84. The tract at residues 67–87 (RRDRYIRTCSFERKLCRCSYS) is PRK6 binding.

The protein belongs to the DEFL family. As to quaternary structure, binds to PRK6 LRRs. Expressed in the pistil. Detected exclusively in the synergid cells.

It is found in the secreted. Pollen tube attractants guiding pollen tubes to the ovular micropyle. This Arabidopsis thaliana (Mouse-ear cress) protein is Protein LURE 1.1.